The primary structure comprises 2060 residues: Fatty acid synthase subunit beta (2060 aa).

The tract at residues 1–32 (MFPGDMESKASSMNGDQPSSPTPSSSTSVTIP) is disordered. Low complexity predominate over residues 18 to 32 (PSSPTPSSSTSVTIP). The acetyltransferase (AT) domain stretch occupies residues 182–543 (VYVIFGGQGN…KAGQGVRVIH (362 aa)). S301 (for acetyltransferase activity) is an active-site residue. The enoyl reductase (ER) domain stretch occupies residues 600 to 845 (TRLFLQPPIM…LIVATEGAPD (246 aa)). Residues 1157 to 1640 (DKNLNWAKAL…CTGDRLAVSM (484 aa)) are dehydratase (DH) domain. The MaoC-like domain maps to 1549–1661 (FEEQEISFTA…VEVQIHKNMA (113 aa)). Residues 1679–2043 (LVFTGQGSQK…FNEVLRLTGS (365 aa)) are malonyl/palmitoyl transferase (MT/PT) domain. Residue S1824 is the For malonyltransferase activity of the active site.

This sequence belongs to the fungal fatty acid synthetase subunit beta family. As to quaternary structure, [Alpha(6)beta(6)] hexamers of two multifunctional subunits (alpha and beta).

It carries out the reaction acetyl-CoA + n malonyl-CoA + 2n NADPH + 4n H(+) = a long-chain-acyl-CoA + n CoA + n CO2 + 2n NADP(+).. The catalysed reaction is holo-[ACP] + acetyl-CoA = acetyl-[ACP] + CoA. It catalyses the reaction holo-[ACP] + malonyl-CoA = malonyl-[ACP] + CoA. The enzyme catalyses a (3R)-hydroxyacyl-[ACP] = a (2E)-enoyl-[ACP] + H2O. It carries out the reaction a 2,3-saturated acyl-[ACP] + NAD(+) = a (2E)-enoyl-[ACP] + NADH + H(+). The catalysed reaction is (9Z)-octadecenoyl-[ACP] + H2O = (9Z)-octadecenoate + holo-[ACP] + H(+). The protein operates within mycotoxin biosynthesis. Fatty acid synthase subunit beta; part of the gene cluster that mediates the biosynthesis of gramillins A and B, bicyclic lipopeptides that induce cell death in maize leaves but not in wheat leaves. The nonribosomal peptide synthetase GRA1 incorporates respectively a glutamic adic (Glu), a leucine (Leu), a serine (Ser), a hydroxyglutamine (HOGln), a 2-amino decanoic acid, and 2 cysteins (CysB and CysA). The biosynthesis of 2-amino decanoic acid incorporated in gramillins could be initiated by a fatty acid synthase composed of the alpha and beta subunits FGSG_00036 and FGSG_11656. The cytochrome P450 monooxygenase FGSG_15680 could hydroxylate the fatty acid chain. Subsequent oxidation to the ketone by the oxidoreductase FGSG_00048 and transamination by aminotransferase FGSG_00049 could form 2-amino-decanoic acid. On the other hand, FGSG_15680 could also be responsible for the HO-modified glutamine at the gamma-position. Whether hydroxylation occurs on the fully assembled product or on the Gln residue prior to assembly into the gramillins requires further proof. The thioredoxin FGSG_00043 could also be required for the disulfide-bond formation between CysA and CysB. The specific involvement of the remaining proteins from the cluster is more difficult to discern, but could have broader regulatory (FGSG_00040 and FGSG_11657) or enzymatic functions (FGSG_00044 and FGSG_00045). The final C-domain of GRA1 does not possess the expected sequence of a termination CT domain, often implicated in macrocyclization and release of a cyclopeptidein fungal NRPs; and the thioesterase FGSG_00047 may act in concert with the terminal C-domain of GRA1 to catalyze the formation of the macrocyclic anhydride and release of the products. This chain is Fatty acid synthase subunit beta, found in Gibberella zeae (strain ATCC MYA-4620 / CBS 123657 / FGSC 9075 / NRRL 31084 / PH-1) (Wheat head blight fungus).